The primary structure comprises 769 residues: Integrin beta-8 (769 aa).

Residues 1-42 (MCGSALAFFTAAFVCLQNDRRGPASFLWAAWVFSLVLGLGQG) form the signal peptide. Residues 43 to 684 (EDNRCASSNA…ECFSSPSYLR (642 aa)) are Extracellular-facing. Positions 46–95 (RCASSNAASCARCLALGPECGWCVQEDFISGGSRSERCDIVSNLISKGCS) constitute a PSI domain. 25 disulfide bridges follow: cysteine 47/cysteine 65, cysteine 55/cysteine 469, cysteine 58/cysteine 83, cysteine 68/cysteine 94, cysteine 211/cysteine 218, cysteine 266/cysteine 307, cysteine 407/cysteine 419, cysteine 439/cysteine 467, cysteine 471/cysteine 491, cysteine 471/cysteine 494, cysteine 481/cysteine 494, cysteine 499/cysteine 528, cysteine 511/cysteine 526, cysteine 520/cysteine 531, cysteine 533/cysteine 546, cysteine 553/cysteine 567, cysteine 561/cysteine 572, cysteine 574/cysteine 583, cysteine 585/cysteine 609, cysteine 593/cysteine 607, cysteine 601/cysteine 612, cysteine 614/cysteine 624, cysteine 627/cysteine 630, cysteine 634/cysteine 661, and cysteine 640/cysteine 657. Residues 146–384 (PVDLYYLVDV…NLVVEAYQKL (239 aa)) enclose the VWFA domain. Residues aspartate 154 and serine 156 each coordinate Mg(2+). Position 193 (aspartate 193) interacts with Ca(2+). N-linked (GlcNAc...) asparagine glycosylation occurs at asparagine 233. Ca(2+) is bound by residues asparagine 249, aspartate 251, proline 253, and glutamate 254. A Mg(2+)-binding site is contributed by glutamate 254. Residue asparagine 402 is glycosylated (N-linked (GlcNAc...) asparagine). N-linked (GlcNAc...) asparagine glycosylation is found at asparagine 421, asparagine 431, asparagine 456, and asparagine 466. 4 consecutive I-EGF domains span residues 471-495 (CEDN…FQCD), 499-547 (CHFD…KYCE), 548-584 (KDDF…DRCQ), and 585-625 (CPSA…RFCE). Asparagine 648 is a glycosylation site (N-linked (GlcNAc...) asparagine). The helical transmembrane segment at 685–704 (IFFIIFIVTFLIGLLKVLII) threads the bilayer. The Cytoplasmic portion of the chain corresponds to 705–769 (RQVILQWNSN…NAHETFRCNF (65 aa)).

This sequence belongs to the integrin beta chain family. In terms of assembly, heterodimer of an alpha and a beta subunit. Beta-8 (ITGB8) associates with alpha-V (ITGAV) to form ITGAV:ITGB8. ITGAV:ITGB8 interacts with TGFB1. As to expression, placenta, kidney, brain, ovary, uterus and in several transformed cells. Transiently expressed in 293 human embryonic kidney cells.

Its subcellular location is the cell membrane. In terms of biological role, integrin alpha-V:beta-8 (ITGAV:ITGB8) is a receptor for fibronectin. It recognizes the sequence R-G-D in its ligands. Integrin alpha-V:beta-6 (ITGAV:ITGB6) mediates R-G-D-dependent release of transforming growth factor beta-1 (TGF-beta-1) from regulatory Latency-associated peptide (LAP), thereby playing a key role in TGF-beta-1 activation on the surface of activated regulatory T-cells (Tregs). Required during vasculogenesis. This is Integrin beta-8 from Homo sapiens (Human).